A 344-amino-acid polypeptide reads, in one-letter code: Phosphoribosylformylglycinamidine cyclo-ligase (344 aa).

This sequence belongs to the AIR synthase family.

It localises to the cytoplasm. It carries out the reaction 2-formamido-N(1)-(5-O-phospho-beta-D-ribosyl)acetamidine + ATP = 5-amino-1-(5-phospho-beta-D-ribosyl)imidazole + ADP + phosphate + H(+). The protein operates within purine metabolism; IMP biosynthesis via de novo pathway; 5-amino-1-(5-phospho-D-ribosyl)imidazole from N(2)-formyl-N(1)-(5-phospho-D-ribosyl)glycinamide: step 2/2. The polypeptide is Phosphoribosylformylglycinamidine cyclo-ligase (Neisseria meningitidis serogroup C / serotype 2a (strain ATCC 700532 / DSM 15464 / FAM18)).